The following is a 372-amino-acid chain: tRNA-specific 2-thiouridylase MnmA (372 aa).

ATP is bound by residues 16–23 (GMSGGVDS) and methionine 42. Residues 102–104 (NPD) are interaction with target base in tRNA. Cysteine 107 serves as the catalytic Nucleophile. A disulfide bridge links cysteine 107 with cysteine 205. ATP is bound at residue glycine 132. Residues 155–157 (KDQ) are interaction with tRNA. Cysteine 205 serves as the catalytic Cysteine persulfide intermediate. An interaction with tRNA region spans residues 317-318 (RY).

Belongs to the MnmA/TRMU family.

It is found in the cytoplasm. The catalysed reaction is S-sulfanyl-L-cysteinyl-[protein] + uridine(34) in tRNA + AH2 + ATP = 2-thiouridine(34) in tRNA + L-cysteinyl-[protein] + A + AMP + diphosphate + H(+). Its function is as follows. Catalyzes the 2-thiolation of uridine at the wobble position (U34) of tRNA, leading to the formation of s(2)U34. The chain is tRNA-specific 2-thiouridylase MnmA from Shewanella putrefaciens (strain CN-32 / ATCC BAA-453).